A 261-amino-acid polypeptide reads, in one-letter code: Hemin import ATP-binding protein HmuV (261 aa).

The 236-residue stretch at 8–243 (IRVTDLSYSV…ESIRTAYGHE (236 aa)) folds into the ABC transporter domain. 40-47 (GRNGAGKS) contributes to the ATP binding site.

It belongs to the ABC transporter superfamily. Heme (hemin) importer (TC 3.A.1.14.5) family. The complex is composed of two ATP-binding proteins (HmuV), two transmembrane proteins (HmuU) and a solute-binding protein (HmuT).

The protein resides in the cell membrane. Part of the ABC transporter complex HmuTUV involved in hemin import. Responsible for energy coupling to the transport system. The sequence is that of Hemin import ATP-binding protein HmuV from Deinococcus radiodurans (strain ATCC 13939 / DSM 20539 / JCM 16871 / CCUG 27074 / LMG 4051 / NBRC 15346 / NCIMB 9279 / VKM B-1422 / R1).